Consider the following 187-residue polypeptide: Large ribosomal subunit protein bL17 (187 aa).

It belongs to the bacterial ribosomal protein bL17 family. In terms of assembly, part of the 50S ribosomal subunit. Contacts protein L32.

This chain is Large ribosomal subunit protein bL17, found in Rhodococcus opacus (strain B4).